A 231-amino-acid chain; its full sequence is Phosphatidylserine decarboxylase proenzyme (231 aa).

The Schiff-base intermediate with substrate; via pyruvic acid role is filled by S200. S200 bears the Pyruvic acid (Ser); by autocatalysis mark.

Belongs to the phosphatidylserine decarboxylase family. PSD-A subfamily. As to quaternary structure, heterodimer of a large membrane-associated beta subunit and a small pyruvoyl-containing alpha subunit. It depends on pyruvate as a cofactor. Post-translationally, is synthesized initially as an inactive proenzyme. Formation of the active enzyme involves a self-maturation process in which the active site pyruvoyl group is generated from an internal serine residue via an autocatalytic post-translational modification. Two non-identical subunits are generated from the proenzyme in this reaction, and the pyruvate is formed at the N-terminus of the alpha chain, which is derived from the carboxyl end of the proenzyme. The post-translation cleavage follows an unusual pathway, termed non-hydrolytic serinolysis, in which the side chain hydroxyl group of the serine supplies its oxygen atom to form the C-terminus of the beta chain, while the remainder of the serine residue undergoes an oxidative deamination to produce ammonia and the pyruvoyl prosthetic group on the alpha chain.

The protein localises to the cell membrane. The catalysed reaction is a 1,2-diacyl-sn-glycero-3-phospho-L-serine + H(+) = a 1,2-diacyl-sn-glycero-3-phosphoethanolamine + CO2. It functions in the pathway phospholipid metabolism; phosphatidylethanolamine biosynthesis; phosphatidylethanolamine from CDP-diacylglycerol: step 2/2. Its function is as follows. Catalyzes the formation of phosphatidylethanolamine (PtdEtn) from phosphatidylserine (PtdSer). The protein is Phosphatidylserine decarboxylase proenzyme of Mycobacterium tuberculosis (strain ATCC 25177 / H37Ra).